The primary structure comprises 403 residues: Chalcone synthase 3 (403 aa).

Cys170 is an active-site residue.

This sequence belongs to the thiolase-like superfamily. Chalcone/stilbene synthases family.

The catalysed reaction is (E)-4-coumaroyl-CoA + 3 malonyl-CoA + 3 H(+) = 2',4,4',6'-tetrahydroxychalcone + 3 CO2 + 4 CoA. The protein operates within secondary metabolite biosynthesis; flavonoid biosynthesis. Its function is as follows. The primary product of this enzyme is 4,2',4',6'-tetrahydroxychalcone (also termed naringenin-chalcone or chalcone) which can under specific conditions spontaneously isomerize into naringenin. The chain is Chalcone synthase 3 (CHS3) from Gerbera hybrida (Daisy).